The chain runs to 487 residues: Cysteine--tRNA ligase (487 aa).

Residue C27 coordinates Zn(2+). The 'HIGH' region signature appears at 29–39 (VTVYDLCHIGH). 3 residues coordinate Zn(2+): C211, H236, and E240. The 'KMSKS' region signature appears at 268–272 (KMSKS). K271 lines the ATP pocket.

It belongs to the class-I aminoacyl-tRNA synthetase family. As to quaternary structure, monomer. Zn(2+) is required as a cofactor.

It is found in the cytoplasm. The enzyme catalyses tRNA(Cys) + L-cysteine + ATP = L-cysteinyl-tRNA(Cys) + AMP + diphosphate. This chain is Cysteine--tRNA ligase, found in Thermodesulfovibrio yellowstonii (strain ATCC 51303 / DSM 11347 / YP87).